The sequence spans 88 residues: Small ribosomal subunit protein uS17 (88 aa).

The protein belongs to the universal ribosomal protein uS17 family. In terms of assembly, part of the 30S ribosomal subunit.

Its function is as follows. One of the primary rRNA binding proteins, it binds specifically to the 5'-end of 16S ribosomal RNA. The sequence is that of Small ribosomal subunit protein uS17 from Methylorubrum extorquens (strain PA1) (Methylobacterium extorquens).